Here is a 246-residue protein sequence, read N- to C-terminus: tRNA (guanine-N(1)-)-methyltransferase (246 aa).

Residues glycine 117 and 137-142 (IGDYVL) each bind S-adenosyl-L-methionine.

This sequence belongs to the RNA methyltransferase TrmD family. In terms of assembly, homodimer.

It localises to the cytoplasm. It catalyses the reaction guanosine(37) in tRNA + S-adenosyl-L-methionine = N(1)-methylguanosine(37) in tRNA + S-adenosyl-L-homocysteine + H(+). Functionally, specifically methylates guanosine-37 in various tRNAs. In Acinetobacter baumannii (strain ACICU), this protein is tRNA (guanine-N(1)-)-methyltransferase.